The chain runs to 1342 residues: MVYSYTEKKRIRKDFGKRPQVLDIPYLLSIQLDSFTKFIEQDPEGQYGLEAAFRSVFPIQSYNGNSKLEYVSYNLREPEFDVKECQIRGVTYSAPLRVKLRLVVYDKDAPANTVKDIKEQEVYMGEIPLMTDNGTFVINGTERVIVSQLHRSPGVFFDSDKGKTHSSGKVLYNARVIPYRGSWLDFEFDPKDNLFVRIDRRRKLPATIILRALNKTTEEILDLFFDKVVFEVKDQTLMMELIPERLRGETATFDIEANGKVYVEAGRRITARHIRQLTKDDITHIEVPVDYIVGKVASHDYVNEDTGEIIIAANQEFSLEDLANLSQAGYKKIEVLFTNDLDHGAYISDTLRADSTVDRLSALVEIYRMMRPGEPPTKEAAEALFESLFFSEERYDLSTVGRMKFNSSIGRDNDEGAGVLDETDIIEVMRKLIDIRNGIGEVDDIDHLGNRRIRSVGEMAENQFRVGLVRVERAVRERLSLGDLDAIMPQDLINAKPISAAVKEFFGSSQLSQFMDQNNPLSEVTHKRRISALGPGGLTRERAGFEVRDVHATHYGRLCPIETPEGPNIGLINSLSAFAQCNEYGFLETPYRRVVDGQVTDQVDYLSAIEEGTFVIAQANAVLTEEGTFADELIIARQKGESGLHPREHIQYMDVATNQVVSVAASLIPFLEHDDANRALMGANMQRQAVPTLKADKPLVGTGIERNVAVDSGVTAVAKRGGVVQSVDASRIVIKVNEDELVPGEAGIDIYNLTKYTRSNQNTCINQRPTVLPGEPVTRGDVLADGPSTDLGELALGQNMRIAFMPWNGYNFEDSILVSERVVQEDRFTTIHIQELSCVARDTKLGSEEITADIPNVGEAALSKLDESGIVYIGAEVKGGDILVGKVTPKGETQLTPEEKLLRAIFGEKASDVKDSSLRVPNSVSGTIIDVQVFTRDGVEKDKRALEIEQMQLKEAKKDITEEFQILEGGLLARVRTLLVAAGVSEVKLDAMDRKQWLEITLDDEAQQNQLEQLAEQYDELKAEFDKKFETKRRKITQGDDLAPGVLKIVKVYLAVKRRIQPGDKMAGRHGNKGVISKINPVEDMPYDEKGQPVDIVLNPLGVPSRMNIGQILEVHMGLAAKGVGDKINQMLKEQQELHKFRNFLQKVYDLGETRQEVDIAALSDDEVRTLIKNLRGGLPIATPIFDGAPEASIKELLKLVDLPESGQLKLFDGRTGDAFERPVTVGYMYMLKLNHLVDDKMHARSTGSYSLVTQQPLGGKAQFGGQRFGEMEVWALEAYGAAYTLQEMLTVKSDDVNGRTKMYKNIVDGDHRMEPGMPESFNVLLKEIRSLGINIELEDEE.

This sequence belongs to the RNA polymerase beta chain family. As to quaternary structure, the RNAP catalytic core consists of 2 alpha, 1 beta, 1 beta' and 1 omega subunit. When a sigma factor is associated with the core the holoenzyme is formed, which can initiate transcription.

It carries out the reaction RNA(n) + a ribonucleoside 5'-triphosphate = RNA(n+1) + diphosphate. DNA-dependent RNA polymerase catalyzes the transcription of DNA into RNA using the four ribonucleoside triphosphates as substrates. In Aliivibrio fischeri (strain ATCC 700601 / ES114) (Vibrio fischeri), this protein is DNA-directed RNA polymerase subunit beta.